The chain runs to 119 residues: Ribonuclease P protein component (119 aa).

It belongs to the RnpA family. As to quaternary structure, consists of a catalytic RNA component (M1 or rnpB) and a protein subunit.

It catalyses the reaction Endonucleolytic cleavage of RNA, removing 5'-extranucleotides from tRNA precursor.. Functionally, RNaseP catalyzes the removal of the 5'-leader sequence from pre-tRNA to produce the mature 5'-terminus. It can also cleave other RNA substrates such as 4.5S RNA. The protein component plays an auxiliary but essential role in vivo by binding to the 5'-leader sequence and broadening the substrate specificity of the ribozyme. This Listeria welshimeri serovar 6b (strain ATCC 35897 / DSM 20650 / CCUG 15529 / CIP 8149 / NCTC 11857 / SLCC 5334 / V8) protein is Ribonuclease P protein component.